The following is a 219-amino-acid chain: Ribose-5-phosphate isomerase A (219 aa).

Residues 28–31 (TGST), 81–84 (DGAD), and 94–97 (KGGG) each bind substrate. E103 functions as the Proton acceptor in the catalytic mechanism. K121 is a binding site for substrate.

Belongs to the ribose 5-phosphate isomerase family. Homodimer.

The enzyme catalyses aldehydo-D-ribose 5-phosphate = D-ribulose 5-phosphate. It functions in the pathway carbohydrate degradation; pentose phosphate pathway; D-ribose 5-phosphate from D-ribulose 5-phosphate (non-oxidative stage): step 1/1. In terms of biological role, catalyzes the reversible conversion of ribose-5-phosphate to ribulose 5-phosphate. This chain is Ribose-5-phosphate isomerase A, found in Nitrosomonas europaea (strain ATCC 19718 / CIP 103999 / KCTC 2705 / NBRC 14298).